The sequence spans 164 residues: MKKVAVYPGTFDPITFGHIDVINKALKLFDKVIIAASDGANKNYLFNSLERVQLIKKALFVDLKFDKKKIEVISFTSLTTDLCKKYKSNIILRGLRAVSDFEYEFQLAGMNRKLNNNIETIFLMSDVENQIISSRFVKEIVRLKGDIKKFTTKSTIKSLKEKYE.

Thr-10 provides a ligand contact to substrate. Residues 10–11 (TF) and His-18 contribute to the ATP site. The substrate site is built by Lys-42, Thr-79, and Arg-93. ATP contacts are provided by residues 94–96 (GLR), Glu-104, and 129–135 (NQIISSR).

It belongs to the bacterial CoaD family. In terms of assembly, homohexamer. Requires Mg(2+) as cofactor.

Its subcellular location is the cytoplasm. It carries out the reaction (R)-4'-phosphopantetheine + ATP + H(+) = 3'-dephospho-CoA + diphosphate. It participates in cofactor biosynthesis; coenzyme A biosynthesis; CoA from (R)-pantothenate: step 4/5. Its function is as follows. Reversibly transfers an adenylyl group from ATP to 4'-phosphopantetheine, yielding dephospho-CoA (dPCoA) and pyrophosphate. This chain is Phosphopantetheine adenylyltransferase, found in Pelagibacter ubique (strain HTCC1062).